Consider the following 128-residue polypeptide: Ribosome-binding factor A (128 aa).

This sequence belongs to the RbfA family. As to quaternary structure, monomer. Binds 30S ribosomal subunits, but not 50S ribosomal subunits or 70S ribosomes.

It localises to the cytoplasm. Functionally, one of several proteins that assist in the late maturation steps of the functional core of the 30S ribosomal subunit. Associates with free 30S ribosomal subunits (but not with 30S subunits that are part of 70S ribosomes or polysomes). Required for efficient processing of 16S rRNA. May interact with the 5'-terminal helix region of 16S rRNA. This is Ribosome-binding factor A from Haemophilus influenzae (strain 86-028NP).